The sequence spans 430 residues: Enolase (430 aa).

Residue Gln164 participates in (2R)-2-phosphoglycerate binding. Glu208 serves as the catalytic Proton donor. Residues Asp245, Glu288, and Asp315 each contribute to the Mg(2+) site. 4 residues coordinate (2R)-2-phosphoglycerate: Lys340, Arg369, Ser370, and Lys391. The active-site Proton acceptor is Lys340.

This sequence belongs to the enolase family. Requires Mg(2+) as cofactor.

The protein resides in the cytoplasm. The protein localises to the secreted. It is found in the cell surface. The enzyme catalyses (2R)-2-phosphoglycerate = phosphoenolpyruvate + H2O. It functions in the pathway carbohydrate degradation; glycolysis; pyruvate from D-glyceraldehyde 3-phosphate: step 4/5. In terms of biological role, catalyzes the reversible conversion of 2-phosphoglycerate (2-PG) into phosphoenolpyruvate (PEP). It is essential for the degradation of carbohydrates via glycolysis. This chain is Enolase, found in Thermococcus kodakarensis (strain ATCC BAA-918 / JCM 12380 / KOD1) (Pyrococcus kodakaraensis (strain KOD1)).